The following is a 51-amino-acid chain: Sperm protamine P1 (51 aa).

It belongs to the protamine P1 family. As to expression, testis.

It is found in the nucleus. It localises to the chromosome. In terms of biological role, protamines substitute for histones in the chromatin of sperm during the haploid phase of spermatogenesis. They compact sperm DNA into a highly condensed, stable and inactive complex. The sequence is that of Sperm protamine P1 (PRM1) from Trachypithecus johnii (Nilgiri langur).